The primary structure comprises 130 residues: Small ribosomal subunit protein uS9 (130 aa).

The segment at 99 to 130 (KSAGMLTRDPRMKERKKPGLKKARKASQFSKR) is disordered. Residues 111-130 (KERKKPGLKKARKASQFSKR) show a composition bias toward basic residues.

This sequence belongs to the universal ribosomal protein uS9 family.

The protein is Small ribosomal subunit protein uS9 of Latilactobacillus sakei subsp. sakei (strain 23K) (Lactobacillus sakei subsp. sakei).